The primary structure comprises 142 residues: Transmembrane protein 170A (142 aa).

Topologically, residues 1–48 (MEGGGGGLGGEPGLLQQILSLRLVPRVGNVTDCQRATLCSFPEMWYGV) are lumenal. Asn29 carries N-linked (GlcNAc...) asparagine glycosylation. The helical transmembrane segment at 49 to 69 (FLWALVSSLFFHIPAGLLALF) threads the bilayer. The Cytoplasmic portion of the chain corresponds to 70-78 (TLRHHKYGR). A helical transmembrane segment spans residues 79–99 (FMSVGIFLMGVLGPISAGILT). Residues 100–114 (SAAIAGVYKAAGKEM) lie on the Lumenal side of the membrane. The chain crosses the membrane as a helical span at residues 115-135 (IPFEALVLGVGQTFCVLIVSF). The Cytoplasmic portion of the chain corresponds to 136-142 (LRILATL).

Belongs to the TMEM170 family.

The protein resides in the endoplasmic reticulum membrane. The protein localises to the nucleus envelope. In terms of biological role, may regulate membrane morphogenesis in the endoplasmic reticulum (ER) by promoting ER sheet formation at the expense of ER tubules. The sequence is that of Transmembrane protein 170A (tmem170a) from Xenopus laevis (African clawed frog).